The sequence spans 267 residues: Hydroxyethylthiazole kinase (267 aa).

Position 46 (methionine 46) interacts with substrate. ATP-binding residues include arginine 122 and serine 168. Position 195 (glycine 195) interacts with substrate.

Belongs to the Thz kinase family. Mg(2+) is required as a cofactor.

The enzyme catalyses 5-(2-hydroxyethyl)-4-methylthiazole + ATP = 4-methyl-5-(2-phosphooxyethyl)-thiazole + ADP + H(+). It participates in cofactor biosynthesis; thiamine diphosphate biosynthesis; 4-methyl-5-(2-phosphoethyl)-thiazole from 5-(2-hydroxyethyl)-4-methylthiazole: step 1/1. In terms of biological role, catalyzes the phosphorylation of the hydroxyl group of 4-methyl-5-beta-hydroxyethylthiazole (THZ). The sequence is that of Hydroxyethylthiazole kinase from Nitratidesulfovibrio vulgaris (strain DP4) (Desulfovibrio vulgaris).